Consider the following 264-residue polypeptide: ATP synthase subunit a (264 aa).

The next 6 membrane-spanning stretches (helical) occupy residues 29-49, 87-107, 134-154, 177-197, 208-228, and 235-255; these read TWHI…LWIF, NALI…MNFM, DVNI…YYSI, IPVN…SLAL, LIFI…SLGV, and LIFH…LTIV.

This sequence belongs to the ATPase A chain family. As to quaternary structure, F-type ATPases have 2 components, CF(1) - the catalytic core - and CF(0) - the membrane proton channel. CF(1) has five subunits: alpha(3), beta(3), gamma(1), delta(1), epsilon(1). CF(0) has three main subunits: a(1), b(2) and c(9-12). The alpha and beta chains form an alternating ring which encloses part of the gamma chain. CF(1) is attached to CF(0) by a central stalk formed by the gamma and epsilon chains, while a peripheral stalk is formed by the delta and b chains.

It localises to the cell inner membrane. Its function is as follows. Key component of the proton channel; it plays a direct role in the translocation of protons across the membrane. The protein is ATP synthase subunit a of Shewanella sp. (strain ANA-3).